The primary structure comprises 82 residues: ATP synthase subunit c (82 aa).

The next 2 membrane-spanning stretches (helical) occupy residues 7–27 (AASV…PGIG) and 57–77 (LAFM…LLFA).

This sequence belongs to the ATPase C chain family. In terms of assembly, F-type ATPases have 2 components, F(1) - the catalytic core - and F(0) - the membrane proton channel. F(1) has five subunits: alpha(3), beta(3), gamma(1), delta(1), epsilon(1). F(0) has four main subunits: a(1), b(1), b'(1) and c(10-14). The alpha and beta chains form an alternating ring which encloses part of the gamma chain. F(1) is attached to F(0) by a central stalk formed by the gamma and epsilon chains, while a peripheral stalk is formed by the delta, b and b' chains.

Its subcellular location is the cellular thylakoid membrane. F(1)F(0) ATP synthase produces ATP from ADP in the presence of a proton or sodium gradient. F-type ATPases consist of two structural domains, F(1) containing the extramembraneous catalytic core and F(0) containing the membrane proton channel, linked together by a central stalk and a peripheral stalk. During catalysis, ATP synthesis in the catalytic domain of F(1) is coupled via a rotary mechanism of the central stalk subunits to proton translocation. Functionally, key component of the F(0) channel; it plays a direct role in translocation across the membrane. A homomeric c-ring of between 10-14 subunits forms the central stalk rotor element with the F(1) delta and epsilon subunits. The chain is ATP synthase subunit c from Synechococcus sp. (strain WH7803).